The primary structure comprises 135 residues: UPF0102 protein PGN_1801 (135 aa).

Belongs to the UPF0102 family.

The chain is UPF0102 protein PGN_1801 from Porphyromonas gingivalis (strain ATCC 33277 / DSM 20709 / CIP 103683 / JCM 12257 / NCTC 11834 / 2561).